The chain runs to 147 residues: Cyanate hydratase (147 aa).

Residues R88, E91, and S114 contribute to the active site.

It belongs to the cyanase family.

The catalysed reaction is cyanate + hydrogencarbonate + 3 H(+) = NH4(+) + 2 CO2. In terms of biological role, catalyzes the reaction of cyanate with bicarbonate to produce ammonia and carbon dioxide. This Ralstonia pickettii (strain 12J) protein is Cyanate hydratase.